Consider the following 317-residue polypeptide: MKQFVRPEFILLKEGQDKNYGKFSVSPLERGFGITLGNAIRRTLLAATPGASVYAIKIAGATHEFTSIPGIIENVTKIILNIKQLVLKIDTSIYSDDEVVQLRIRSDIQGPIYAGDLDIPAGVEILNKDLLIATISEGGVLDLVLYAKNSRGYKTFKDNKNEKNIEPGMITIDSNYSPIIKVAYSVDSAKIGRAIDLEKLELEVTTDGSITAIDAISIASRILVAHLEFFIDLNREISVLEVIGTNQTDDKELDRTVEELDFTQRSLNCLKRAGINTLRELVSKNEDEIGSIRNLGRKSLKEIKDKVASLGLAFRQS.

The segment at methionine 1–asparagine 234 is alpha N-terminal domain (alpha-NTD). The tract at residues aspartate 250–serine 317 is alpha C-terminal domain (alpha-CTD).

It belongs to the RNA polymerase alpha chain family. In terms of assembly, homodimer. The RNAP catalytic core consists of 2 alpha, 1 beta, 1 beta' and 1 omega subunit. When a sigma factor is associated with the core the holoenzyme is formed, which can initiate transcription.

It catalyses the reaction RNA(n) + a ribonucleoside 5'-triphosphate = RNA(n+1) + diphosphate. DNA-dependent RNA polymerase catalyzes the transcription of DNA into RNA using the four ribonucleoside triphosphates as substrates. In Mycoplasma mycoides subsp. mycoides SC (strain CCUG 32753 / NCTC 10114 / PG1), this protein is DNA-directed RNA polymerase subunit alpha.